The chain runs to 147 residues: Urease accessory protein UreE (147 aa).

This sequence belongs to the UreE family.

The protein resides in the cytoplasm. Functionally, involved in urease metallocenter assembly. Binds nickel. Probably functions as a nickel donor during metallocenter assembly. In Marinomonas sp. (strain MWYL1), this protein is Urease accessory protein UreE.